Reading from the N-terminus, the 123-residue chain is Large ribosomal subunit protein bL12 (123 aa).

Belongs to the bacterial ribosomal protein bL12 family. In terms of assembly, homodimer. Part of the ribosomal stalk of the 50S ribosomal subunit. Forms a multimeric L10(L12)X complex, where L10 forms an elongated spine to which 2 to 4 L12 dimers bind in a sequential fashion. Binds GTP-bound translation factors.

Forms part of the ribosomal stalk which helps the ribosome interact with GTP-bound translation factors. Is thus essential for accurate translation. The chain is Large ribosomal subunit protein bL12 from Rhodopseudomonas palustris (strain HaA2).